Consider the following 498-residue polypeptide: ATP synthase subunit beta, chloroplastic (498 aa).

Thr6 carries the post-translational modification Phosphothreonine. Ser13 bears the Phosphoserine mark. Residue 172 to 179 (GGAGVGKT) coordinates ATP.

This sequence belongs to the ATPase alpha/beta chains family. As to quaternary structure, F-type ATPases have 2 components, CF(1) - the catalytic core - and CF(0) - the membrane proton channel. CF(1) has five subunits: alpha(3), beta(3), gamma(1), delta(1), epsilon(1). CF(0) has four main subunits: a(1), b(1), b'(1) and c(9-12).

The protein localises to the plastid. Its subcellular location is the chloroplast thylakoid membrane. The catalysed reaction is ATP + H2O + 4 H(+)(in) = ADP + phosphate + 5 H(+)(out). Functionally, produces ATP from ADP in the presence of a proton gradient across the membrane. The catalytic sites are hosted primarily by the beta subunits. The sequence is that of ATP synthase subunit beta, chloroplastic from Nasturtium officinale (Watercress).